A 218-amino-acid polypeptide reads, in one-letter code: C-type lectin domain family 2 member H (218 aa).

The Cytoplasmic segment spans residues 1–52 (MNAAKVETSSMGMLQRADLTAADCLQEGEMGKKIQGKCFRIISTVSPVKLYC). Residues 53 to 73 (CYGVIMVLTVAVIALSVALSV) traverse the membrane as a helical; Signal-anchor for type II membrane protein segment. Residues 74–218 (RNKIPAMEDR…SRVGSVPRHV (145 aa)) lie on the Extracellular side of the membrane. A disulfide bridge connects residues C90 and C101. The C-type lectin domain occupies 97–201 (FGSKCFYFSE…SYTHRKWICS (105 aa)). An N-linked (GlcNAc...) asparagine glycan is attached at N110. A disulfide bridge connects residues C118 and C200.

In terms of tissue distribution, detected in ileum, liver, kidney and in IL2-activated natural killer cells.

The protein resides in the cell membrane. Functionally, lectin-type cell surface receptor. This Mus musculus (Mouse) protein is C-type lectin domain family 2 member H (Clec2h).